We begin with the raw amino-acid sequence, 239 residues long: LexA repressor (239 aa).

A DNA-binding region (H-T-H motif) is located at residues 26 to 46 (FDEMKDALDLASKSGIHRLIT). Residues S159 and K197 each act as for autocatalytic cleavage activity in the active site.

The protein belongs to the peptidase S24 family. Homodimer.

The catalysed reaction is Hydrolysis of Ala-|-Gly bond in repressor LexA.. Represses a number of genes involved in the response to DNA damage (SOS response), including recA and lexA. In the presence of single-stranded DNA, RecA interacts with LexA causing an autocatalytic cleavage which disrupts the DNA-binding part of LexA, leading to derepression of the SOS regulon and eventually DNA repair. The polypeptide is LexA repressor (Rhizobium etli (strain ATCC 51251 / DSM 11541 / JCM 21823 / NBRC 15573 / CFN 42)).